We begin with the raw amino-acid sequence, 134 residues long: Small ribosomal subunit protein bS16 (134 aa).

The tract at residues 105–134 (EAERRQKRLTAKTRRRQAKKAAEAAGSAEG) is disordered. Basic residues predominate over residues 109–123 (RQKRLTAKTRRRQAK).

It belongs to the bacterial ribosomal protein bS16 family.

This chain is Small ribosomal subunit protein bS16, found in Chlorobaculum parvum (strain DSM 263 / NCIMB 8327) (Chlorobium vibrioforme subsp. thiosulfatophilum).